The chain runs to 227 residues: Orotidine 5'-phosphate decarboxylase (227 aa).

Residues Asp-8, Lys-30, 57 to 66 (DLKFHDIPNT), Thr-116, Arg-177, Gln-186, Gly-206, and Arg-207 each bind substrate. The active-site Proton donor is Lys-59.

Belongs to the OMP decarboxylase family. Type 1 subfamily. As to quaternary structure, homodimer.

It catalyses the reaction orotidine 5'-phosphate + H(+) = UMP + CO2. The protein operates within pyrimidine metabolism; UMP biosynthesis via de novo pathway; UMP from orotate: step 2/2. Its function is as follows. Catalyzes the decarboxylation of orotidine 5'-monophosphate (OMP) to uridine 5'-monophosphate (UMP). The polypeptide is Orotidine 5'-phosphate decarboxylase (Acinetobacter baylyi (strain ATCC 33305 / BD413 / ADP1)).